A 404-amino-acid polypeptide reads, in one-letter code: Voltage-gated potassium channel subunit beta-3 (404 aa).

Residues Met1 to Ser14 show a composition bias toward polar residues. Positions Met1–Gly77 are disordered. Positions Pro28–Gly50 are enriched in gly residues. NADP(+) contacts are provided by Thr97, Trp98, Gln104, and Asp126. The active-site Proton donor/acceptor is Tyr131. NADP(+)-binding residues include Asn199, Ser229, Arg230, Gln255, Trp284, Pro286, Leu287, Ala288, Cys289, Lys295, Arg305, Gly364, Ser366, Gln370, and Glu373.

It belongs to the shaker potassium channel beta subunit family. As to quaternary structure, forms heteromultimeric complex with alpha subunits. Interacts with KCNA5 and KCNB2. Brain specific. Most prominent expression in cerebellum. Weaker signals detected in cortex, occipital lobe, frontal lobe and temporal lobe. Not detected in spinal cord, heart, lung, liver, kidney, pancreas, placenta and skeletal muscle.

The protein resides in the cytoplasm. Functionally, regulatory subunit of the voltage-gated potassium (Kv) channels composed of pore-forming and potassium-conducting alpha subunits and of regulatory beta subunit. The beta-3/KCNAB3 subunit may mediate closure of potassium channels. Increases inactivation of Kv1.5/KCNA5 alpha subunit-containing channels. May display nicotinamide adenine dinucleotide phosphate (NADPH)-dependent aldoketoreductase activity. The binding of oxidized and reduced NADP(H) cofactors may be required for the regulation of potassium channel activity. The sequence is that of Voltage-gated potassium channel subunit beta-3 from Homo sapiens (Human).